A 9439-amino-acid chain; its full sequence is Extracellular matrix-binding protein ebh (9439 aa).

FIVAR domains lie at 1815–1871, 1901–1957, 1985–2041, 2071–2127, 2155–2211, 2241–2297, 2325–2381, 2411–2467, 2488–2551, 2581–2638, 2665–2720, 2748–2804, 2832–2888, 2918–2974, 3002–3058, 3088–3144, 3172–3228, 3258–3314, 3335–3398, 3428–3484, 3512–3567, 3595–3650, 3678–3733, 3802–3860, 3928–3983, 4056–4114, 4182–4240, 4308–4365, and 4433–4491; these read ARRR…VNSA, AKEQ…INDA, AYDT…VRDA, AKKR…ITSE, AYNK…VTQA, AKNR…ISSE, AYNK…VEDA, AKEK…ITEN, DTTS…VNNA, ARNR…STEI, AKNQ…IRTN, AKTA…VSDE, AYNQ…VNNA, AKEQ…ISNA, AYNQ…VTAA, AKQQ…ITNE, AYNQ…VAQA, AKNQ…ISDE, DTTE…VNNA, ARLN…ITTE, AKTA…IKTN, IKRQ…VKES, AKNR…IRQN, SMTA…IDQK, AMTQ…LDPA, AMQA…VNQK, SMGT…VDNA, AMHT…INQK, and VMEQ…IEQA. Basic and acidic residues predominate over residues 2495-2507; it reads EVRKLSRRGDTNN. A disordered region spans residues 2495–2514; it reads EVRKLSRRGDTNNKKPSSVS. Positions 2925 to 2938 are enriched in polar residues; that stretch reads AVDQVPSTEGMTQQ. The tract at residues 2925–2951 is disordered; sequence AVDQVPSTEGMTQQTKDDYNSKQQAAQ. The segment at 4522-4542 is disordered; it reads LSGLTNEQKPKENQAVNGAQT. Residues 4559–4617 form the FIVAR 30 domain; sequence SMQTLRDLVNNQNAIHSTSNYFNEDSTQKNTYDNAIDNGSTYITGQHNPELNKSTIDQT. The interval 4648–4671 is disordered; the sequence is LGYLNDPQKSGEESLVNGSNTRSE. FIVAR domains follow at residues 4685–4743, 4811–4869, 4937–4995, 5063–5115, 5189–5246, 5314–5372, 5440–5498, 5566–5624, 5692–5750, 5818–5875, 5943–6000, 6068–6126, 6194–6252, and 6320–6378; these read AMKQ…IEQK, AMQA…IEQA, AMSN…IEQA, AMEA…VLDK, AMLG…INQL, LMGA…VTTA, AMGE…IDQA, AMKK…ITNA, AMKQ…IADT, DMST…LQDL, AMKA…IKQA, KMEE…INRT, AMQQ…IQAI, and EMGT…IADA. Over residues 5699–5712 the composition is skewed to polar residues; the sequence is QVNQDDQISNSSPF. The disordered stretch occupies residues 5699-5719; that stretch reads QVNQDDQISNSSPFINEDSDK. Positions 6413-6434 are disordered; it reads NNSQRQSEHDEINSAPSRTEVS. 18 consecutive FIVAR domains span residues 6446–6504, 6572–6630, 6698–6755, 6823–6877, 6949–7007, 7075–7133, 7201–7259, 7327–7384, 7452–7510, 7578–7636, 7704–7762, 7830–7888, 7956–8010, 8078–8137, 8205–8264, 8332–8391, 8459–8518, and 8587–8643; these read AMRQ…IEDA, AMKA…INRA, SMNQ…IDQA, TMKA…ANDE, AMKK…INTI, SMNT…VERA, DMKK…IENA, AMKH…IKQL, AMEN…IEHA, AMKA…INSI, AMET…VDIV, AMKS…VRQA, VMGK…TKQA, IMGE…IDTF, AMKS…IQGL, AMKD…VLGL, KMKL…IQHL, and AMQG…ANII. Residues 9306–9324 traverse the membrane as a helical segment; it reads TVGVITLTGLLSSFWLVLA. 3 stretches are compositionally biased toward basic and acidic residues: residues 9363-9375, 9386-9395, and 9404-9413; these read DKEEQIQNDDKHS, EKQLSEEDIH, and QNSDNKDTKQ. Residues 9363 to 9439 form a disordered region; sequence DKEEQIQNDD…VVKTKKRSKK (77 aa). Residues 9414–9439 are compositionally biased toward basic residues; that stretch reads KKVTSKKKKTPQSTKKVVKTKKRSKK.

Its subcellular location is the cell membrane. This is Extracellular matrix-binding protein ebh (ebh) from Staphylococcus epidermidis (strain ATCC 35984 / DSM 28319 / BCRC 17069 / CCUG 31568 / BM 3577 / RP62A).